Consider the following 631-residue polypeptide: Polyadenylate-binding protein, cytoplasmic and nuclear (631 aa).

A disordered region spans residues 1-56 (MSDLQESLEKLSINEKAPQAPADDATPSNTTTLEKESSESAAAAAGEGAGEEGEEA). RRM domains follow at residues 58–136 (ASLY…WSQR), 146–223 (GNIF…KHVS), 239–316 (TNVY…RAQK), and 342–419 (VNLF…LAQR). The disordered stretch occupies residues 518-545 (GGEFNGPNGQRQQRGAYPPNRNQKGGRP). The PABC domain occupies 545 to 626 (PQRDLAAIIS…ALTAFEEYKK (82 aa)).

It belongs to the polyadenylate-binding protein type-1 family.

It localises to the cytoplasm. The protein resides in the nucleus. Functionally, binds the poly(A) tail of mRNA. Appears to be an important mediator of the multiple roles of the poly(A) tail in mRNA biogenesis, stability and translation. In the nucleus, involved in both mRNA cleavage and polyadenylation. Is also required for efficient mRNA export to the cytoplasm. Acts in concert with a poly(A)-specific nuclease (PAN) to affect poly(A) tail shortening, which may occur concomitantly with either nucleocytoplasmic mRNA transport or translational initiation. In the cytoplasm, stimulates translation initiation and regulates mRNA decay through translation termination-coupled poly(A) shortening, probably mediated by PAN. The protein is Polyadenylate-binding protein, cytoplasmic and nuclear (PAB1) of Meyerozyma guilliermondii (strain ATCC 6260 / CBS 566 / DSM 6381 / JCM 1539 / NBRC 10279 / NRRL Y-324) (Yeast).